The chain runs to 327 residues: Phenylalanine--tRNA ligase alpha subunit (327 aa).

Mg(2+) is bound at residue Glu252.

This sequence belongs to the class-II aminoacyl-tRNA synthetase family. Phe-tRNA synthetase alpha subunit type 1 subfamily. Tetramer of two alpha and two beta subunits. The cofactor is Mg(2+).

It localises to the cytoplasm. The enzyme catalyses tRNA(Phe) + L-phenylalanine + ATP = L-phenylalanyl-tRNA(Phe) + AMP + diphosphate + H(+). The chain is Phenylalanine--tRNA ligase alpha subunit from Aeromonas salmonicida (strain A449).